The following is a 1505-amino-acid chain: Homeobox protein cut-like 1 (1505 aa).

The stretch at 56–407 (LLKSFQGEID…ALRISNSDLS (352 aa)) forms a coiled coil. Polar residues-rich tracts occupy residues 396-407 (NAALRISNSDLS) and 440-451 (EQASNTNGTHQF). 4 disordered regions span residues 396–455 (NAAL…SPAG), 512–552 (YSTN…EEMD), 646–669 (PKRRNGSEGNITTRIRASETGSDE), and 682–704 (LQVQKTAEPAQPSSASGSGNSDD). The segment covering 516–546 (SISSQSPLQQSPDVNGMAPSPSQSESAGSVS) has biased composition (low complexity). Glu-540 is modified (phosphoserine). The CUT 1 DNA-binding region spans 542–629 (AGSVSEGEEM…ILALRSIQGR (88 aa)). Residues 694-703 (SSASGSGNSD) are compositionally biased toward low complexity. Position 763 is a phosphoserine (Ser-763). The segment at 768–802 (SAAPEAGASALPNPPALKKEAQDAPGLDPQGAADC) is disordered. Residues Lys-785, Lys-811, and Lys-842 each participate in a glycyl lysine isopeptide (Lys-Gly) (interchain with G-Cter in SUMO2) cross-link. The span at 815–853 (GRSGAWKDHWWSAVQPERRNAASSEEAKAEETGGGKEKG) shows a compositional bias: basic and acidic residues. The disordered stretch occupies residues 815-930 (GRSGAWKDHW…KPTKPSVPPL (116 aa)). Polar residues-rich tracts occupy residues 868 to 877 (SQLQGPSSSE) and 887 to 911 (SPYSQSSELSLTGASRSETPQNSPL). At Ser-909 the chain carries Phosphoserine. The segment at residues 934–1021 (QYEVYMYQEV…QGVLPVQGQQ (88 aa)) is a DNA-binding region (CUT 2). Over residues 1036-1049 (LQQGCVSSESTPKT) the composition is skewed to polar residues. The disordered stretch occupies residues 1036–1110 (LQQGCVSSES…QPTTPLPLSG (75 aa)). Low complexity predominate over residues 1050–1066 (SASCSPAPESPMSSSES). Residues Ser-1059 and Ser-1069 each carry the phosphoserine modification. Residues 1117-1204 (QELVAMSPEL…VEKLMDMKRM (88 aa)) constitute a DNA-binding region (CUT 3). The disordered stretch occupies residues 1210–1247 (MKRRHSSVSDSQPCEPPSVGTEYSQGASPQPQHQLKKP). A compositionally biased stretch (polar residues) spans 1230–1242 (TEYSQGASPQPQH). Residues 1244–1303 (LKKPRVVLAPEEKEALKRAYQQKPYPSPKTIEDLATQLNLKTSTVINWFHNYRSRIRREL) constitute a DNA-binding region (homeobox). Ser-1270 is subject to Phosphoserine. A Glycyl lysine isopeptide (Lys-Gly) (interchain with G-Cter in SUMO2) cross-link involves residue Lys-1284. The tract at residues 1312–1480 (SQGQAGASDS…SRDNPLRKKK (169 aa)) is disordered. The span at 1316–1333 (AGASDSPSARSGRAAPSS) shows a compositional bias: low complexity. Ser-1337 is subject to Phosphoserine. 2 stretches are compositionally biased toward basic and acidic residues: residues 1353–1368 (EEPKSQGEAEREEVPR) and 1384–1394 (DDARDDDHEGG). Low complexity-rich tracts occupy residues 1405 to 1436 (PASATATAAPAAPEDAATSAAAAPGEGPAAPS) and 1443 to 1455 (NSSSSSAPRRPSS). Ser-1455 is modified (phosphoserine). Basic and acidic residues predominate over residues 1467–1476 (GARDSRDNPL). Phosphoserine occurs at positions 1486 and 1496.

The protein belongs to the CUT homeobox family. In terms of assembly, interacts with BANP. Interacts with SATB1 (via DNA-binding domains); the interaction inhibits the attachment of both proteins to DNA. Phosphorylated by PKA. In terms of processing, as cells progress into S phase, a fraction of CUX1 molecules is proteolytically processed into N-terminally truncated proteins of 110 kDa by CTSL. Cell cycle-dependent processing of CUX1 serves to generate a CDP/Cux p110 with distinct DNA binding and transcriptional properties.

It is found in the nucleus. In terms of biological role, transcription factor involved in the control of neuronal differentiation in the brain. Regulates dendrite development and branching, and dendritic spine formation in cortical layers II-III. Also involved in the control of synaptogenesis. In addition, it has probably a broad role in mammalian development as a repressor of developmentally regulated gene expression. May act by preventing binding of positively-activing CCAAT factors to promoters. Component of nf-munr repressor; binds to the matrix attachment regions (MARs) (5' and 3') of the immunoglobulin heavy chain enhancer. Represses T-cell receptor (TCR) beta enhancer function by binding to MARbeta, an ATC-rich DNA sequence located upstream of the TCR beta enhancer. Binds to the TH enhancer; may require the basic helix-loop-helix protein TCF4 as a coactivator. Functionally, plays a role in cell cycle progression, in particular at the G1/S transition. As cells progress into S phase, a fraction of CUX1 molecules is proteolytically processed into N-terminally truncated proteins of 110 kDa. While CUX1 only transiently binds to DNA and carries the CCAAT-displacement activity, CDP/Cux p110 makes a stable interaction with DNA and stimulates expression of genes such as POLA1. In Homo sapiens (Human), this protein is Homeobox protein cut-like 1.